The chain runs to 1574 residues: Pentafunctional AROM polypeptide (1574 aa).

The 3-dehydroquinate synthase stretch occupies residues 1 to 384 (MSCSNNTEPT…HEPRATTVED (384 aa)). NAD(+) contacts are provided by residues 49–51 (DTN), 85–88 (EISK), 116–118 (GGV), and Asp-121. A 7-phospho-2-dehydro-3-deoxy-D-arabino-heptonate-binding site is contributed by Arg-132. 141-142 (TT) is an NAD(+) binding site. Positions 148 and 154 each coordinate 7-phospho-2-dehydro-3-deoxy-D-arabino-heptonate. Residue Lys-163 coordinates NAD(+). Residue Asn-164 participates in 7-phospho-2-dehydro-3-deoxy-D-arabino-heptonate binding. NAD(+)-binding positions include 181–184 (FLET) and Asn-192. Glu-196 lines the Zn(2+) pocket. 7-phospho-2-dehydro-3-deoxy-D-arabino-heptonate-binding positions include 196 to 199 (EVIK) and Lys-250. The Proton acceptor; for 3-dehydroquinate synthase activity role is filled by Glu-260. 7-phospho-2-dehydro-3-deoxy-D-arabino-heptonate-binding positions include 264–268 (RNLLN) and His-271. His-271 is a Zn(2+) binding site. His-275 functions as the Proton acceptor; for 3-dehydroquinate synthase activity in the catalytic mechanism. 7-phospho-2-dehydro-3-deoxy-D-arabino-heptonate contacts are provided by His-287 and Lys-356. His-287 is a Zn(2+) binding site. The EPSP synthase stretch occupies residues 397-837 (ITPGVSTKLA…WDTLSQSFGL (441 aa)). Residue Cys-819 is the For EPSP synthase activity of the active site. The tract at residues 858 to 1052 (TRSVFIVGMR…TAKEQSFFVS (195 aa)) is shikimate kinase. Residue 865 to 872 (GMRGAGKT) coordinates ATP. The segment at 1053–1266 (LTVPSVDSAV…AAPGQLSAAE (214 aa)) is 3-dehydroquinase. His-1169 acts as the Proton acceptor; for 3-dehydroquinate dehydratase activity in catalysis. Lys-1197 serves as the catalytic Schiff-base intermediate with substrate; for 3-dehydroquinate dehydratase activity. The tract at residues 1279-1574 (AQSFHLFGKP…NGDEIPTSTD (296 aa)) is shikimate dehydrogenase.

It in the N-terminal section; belongs to the sugar phosphate cyclases superfamily. Dehydroquinate synthase family. In the 2nd section; belongs to the EPSP synthase family. This sequence in the 3rd section; belongs to the shikimate kinase family. The protein in the 4th section; belongs to the type-I 3-dehydroquinase family. It in the C-terminal section; belongs to the shikimate dehydrogenase family. Homodimer. The cofactor is Zn(2+).

The protein resides in the cytoplasm. The catalysed reaction is 7-phospho-2-dehydro-3-deoxy-D-arabino-heptonate = 3-dehydroquinate + phosphate. It catalyses the reaction 3-dehydroquinate = 3-dehydroshikimate + H2O. The enzyme catalyses shikimate + NADP(+) = 3-dehydroshikimate + NADPH + H(+). It carries out the reaction shikimate + ATP = 3-phosphoshikimate + ADP + H(+). The catalysed reaction is 3-phosphoshikimate + phosphoenolpyruvate = 5-O-(1-carboxyvinyl)-3-phosphoshikimate + phosphate. Its pathway is metabolic intermediate biosynthesis; chorismate biosynthesis; chorismate from D-erythrose 4-phosphate and phosphoenolpyruvate: step 2/7. It participates in metabolic intermediate biosynthesis; chorismate biosynthesis; chorismate from D-erythrose 4-phosphate and phosphoenolpyruvate: step 3/7. It functions in the pathway metabolic intermediate biosynthesis; chorismate biosynthesis; chorismate from D-erythrose 4-phosphate and phosphoenolpyruvate: step 4/7. The protein operates within metabolic intermediate biosynthesis; chorismate biosynthesis; chorismate from D-erythrose 4-phosphate and phosphoenolpyruvate: step 5/7. Its pathway is metabolic intermediate biosynthesis; chorismate biosynthesis; chorismate from D-erythrose 4-phosphate and phosphoenolpyruvate: step 6/7. In terms of biological role, the AROM polypeptide catalyzes 5 consecutive enzymatic reactions in prechorismate polyaromatic amino acid biosynthesis. The chain is Pentafunctional AROM polypeptide from Verticillium alfalfae (strain VaMs.102 / ATCC MYA-4576 / FGSC 10136) (Verticillium wilt of alfalfa).